A 157-amino-acid polypeptide reads, in one-letter code: Protein Smg homolog (157 aa).

It belongs to the Smg family.

The chain is Protein Smg homolog from Xylella fastidiosa (strain M23).